We begin with the raw amino-acid sequence, 232 residues long: Small ribosomal subunit protein uS3 (232 aa).

The region spanning 39-107 (VRQFLIKELA…PAQINIAEVR (69 aa)) is the KH type-2 domain.

It belongs to the universal ribosomal protein uS3 family. In terms of assembly, part of the 30S ribosomal subunit. Forms a tight complex with proteins S10 and S14.

In terms of biological role, binds the lower part of the 30S subunit head. Binds mRNA in the 70S ribosome, positioning it for translation. This Serratia proteamaculans (strain 568) protein is Small ribosomal subunit protein uS3.